Consider the following 216-residue polypeptide: Somatotropin (216 aa).

The first 25 residues, 1–25, serve as a signal peptide directing secretion; the sequence is MAPGSWFSPLLIAVVTLGLPQGAAA. Residue His-45 coordinates Zn(2+). A disulfide bridge connects residues Cys-78 and Cys-189. A Zn(2+)-binding site is contributed by Glu-198. A disulfide bridge connects residues Cys-206 and Cys-214.

The protein belongs to the somatotropin/prolactin family. Pituitary gland.

The protein resides in the secreted. In terms of biological role, growth hormone plays an important role in growth control. This Meleagris gallopavo (Wild turkey) protein is Somatotropin (GH).